The following is a 288-amino-acid chain: Syntaxin PEP12 (288 aa).

Over methionine 1–arginine 268 the chain is Cytoplasmic. Phosphoserine is present on residues serine 2 and serine 23. In terms of domain architecture, t-SNARE coiled-coil homology spans glutamine 195–alanine 257. The chain crosses the membrane as a helical; Anchor for type IV membrane protein span at residues valine 269–leucine 288.

It belongs to the syntaxin family. Ubiquitinated.

The protein localises to the membrane. Plays a role in the sorting and targeting of vacuolar proteases. This Saccharomyces cerevisiae (strain ATCC 204508 / S288c) (Baker's yeast) protein is Syntaxin PEP12 (PEP12).